Consider the following 327-residue polypeptide: Cobalamin biosynthesis protein CobD (327 aa).

4 consecutive transmembrane segments (helical) span residues glycine 60–leucine 80, leucine 82–alanine 102, aspartate 159–tyrosine 179, and leucine 304–leucine 324.

It belongs to the CobD/CbiB family.

It is found in the cell membrane. The protein operates within cofactor biosynthesis; adenosylcobalamin biosynthesis. In terms of biological role, converts cobyric acid to cobinamide by the addition of aminopropanol on the F carboxylic group. In Brucella anthropi (strain ATCC 49188 / DSM 6882 / CCUG 24695 / JCM 21032 / LMG 3331 / NBRC 15819 / NCTC 12168 / Alc 37) (Ochrobactrum anthropi), this protein is Cobalamin biosynthesis protein CobD.